The chain runs to 876 residues: Leucine--tRNA ligase (876 aa).

The 'HIGH' region signature appears at 42 to 52 (PYPSGKLHMGH). Positions 634 to 638 (KMSKS) match the 'KMSKS' region motif. Lysine 637 is an ATP binding site.

The protein belongs to the class-I aminoacyl-tRNA synthetase family.

The protein localises to the cytoplasm. It catalyses the reaction tRNA(Leu) + L-leucine + ATP = L-leucyl-tRNA(Leu) + AMP + diphosphate. This is Leucine--tRNA ligase from Neisseria meningitidis serogroup B (strain ATCC BAA-335 / MC58).